Here is a 389-residue protein sequence, read N- to C-terminus: uncharacterized protein (389 aa).

3 WD repeats span residues 11 to 53, 146 to 186, and 289 to 330; these read SFGS…QKIK, SHHD…EEDA, and AHGD…LDIP. At Ser-351 the chain carries Phosphoserine. Residues 361–389 are disordered; the sequence is QKESVSTRPRKEKHKKAKKHSMKSRFKPY. The segment covering 368–389 has biased composition (basic residues); it reads RPRKEKHKKAKKHSMKSRFKPY.

This is an uncharacterized protein from Saccharomyces cerevisiae (strain ATCC 204508 / S288c) (Baker's yeast).